The sequence spans 782 residues: Endonuclease MutS2 (782 aa).

336 to 343 contributes to the ATP binding site; it reads GPNTGGKT. Residues 707 to 782 enclose the Smr domain; it reads LDLRGYRYED…GFGVTVATLK (76 aa).

This sequence belongs to the DNA mismatch repair MutS family. MutS2 subfamily. In terms of assembly, homodimer. Binds to stalled ribosomes, contacting rRNA.

Its function is as follows. Endonuclease that is involved in the suppression of homologous recombination and thus may have a key role in the control of bacterial genetic diversity. Functionally, acts as a ribosome collision sensor, splitting the ribosome into its 2 subunits. Detects stalled/collided 70S ribosomes which it binds and splits by an ATP-hydrolysis driven conformational change. Acts upstream of the ribosome quality control system (RQC), a ribosome-associated complex that mediates the extraction of incompletely synthesized nascent chains from stalled ribosomes and their subsequent degradation. Probably generates substrates for RQC. In Staphylococcus aureus (strain MRSA252), this protein is Endonuclease MutS2.